A 574-amino-acid chain; its full sequence is Peptidyl-prolyl cis-trans isomerase FKBP9 (574 aa).

The N-terminal stretch at 1–26 (MAIRARSWRPPPPPLLLLLLWVTGQA) is a signal peptide. PPIase FKBP-type domains are found at residues 58–146 (GDFV…MDIW), 170–258 (SDFV…LDLH), 282–369 (GDFL…IDFH), and 393–481 (GDYL…LELV). Residues Asn178, Asn290, Asn306, and Asn401 are each glycosylated (N-linked (GlcNAc...) asparagine). 2 EF-hand domains span residues 492–527 (WNGEVSANLFEEIDKDGDGEVLLEEFSEYIHAQVAS) and 537–572 (DAEMIVKNMFTNQDRNGDGKVTAEEFKLKDQETKHD). Residues Asp505, Asp507, Asp509, Glu511, Glu516, Asp550, Asn552, Asp554, Lys556, and Glu561 each contribute to the Ca(2+) site. Positions 571 to 574 (HDEL) match the Prevents secretion from ER motif.

In terms of processing, phosphorylated.

It localises to the endoplasmic reticulum. The catalysed reaction is [protein]-peptidylproline (omega=180) = [protein]-peptidylproline (omega=0). With respect to regulation, inhibited by FK506. PPIases accelerate the folding of proteins during protein synthesis. In Bos taurus (Bovine), this protein is Peptidyl-prolyl cis-trans isomerase FKBP9 (FKBP9).